A 618-amino-acid polypeptide reads, in one-letter code: Leucine aminopeptidase 2 (618 aa).

Residues 140-142 (QCQ) and 272-277 (PYGGME) each bind a peptide. His-301 serves as a coordination point for Zn(2+). Glu-302 acts as the Proton acceptor in catalysis. The Zn(2+) site is built by His-305 and Glu-324. Tyr-389 functions as the Proton donor in the catalytic mechanism.

Belongs to the peptidase M1 family. Zn(2+) serves as cofactor.

It is found in the cytoplasm. The protein resides in the nucleus. It carries out the reaction an epoxide + H2O = an ethanediol. In terms of biological role, aminopeptidase that preferentially cleaves di- and tripeptides. Also has low epoxide hydrolase activity (in vitro). Can hydrolyze the epoxide leukotriene LTA(4) but it forms preferentially 5,6-dihydroxy-7,9,11,14-eicosatetraenoic acid rather than the cytokine leukotriene B(4) as the product compared to the homologous mammalian enzyme (in vitro). The sequence is that of Leucine aminopeptidase 2 from Emericella nidulans (strain FGSC A4 / ATCC 38163 / CBS 112.46 / NRRL 194 / M139) (Aspergillus nidulans).